Consider the following 478-residue polypeptide: MAKDKKLVEEITSMNDDFGQWYTDVIKKAELVDYSSVRGCMVIKPYGYAIWENIQKSLDTRFKETGHENVYMPMFIPESLLLKEKEHVEGFAPEVAWVTHGGDEKLTERLCVRPTSETLFCEHYSNSIQSYRDLPKLYNQWCSVVRWEKTTRPFLRTLEFLWQEGHTAHATAEEAQEETIRMLNVYADVLENVLAIPVIKGRKTEKEKFAGAHATYTVESLMHDGKALQSGTSHNFGDGFAKAFDIQYTDKNNQLQYVHQTSWGVTTRLIGAIIMVHGDDSGLVLPPAIAPTQLVIIPVSQHKEGVLEKANELKQKLSAKFRVKMDDSDKMPGWKFSEYEMKGVPLRIEIGPKDIEKNQAVLVRRDNREKIFVSLDNLEETVVNTLADVQKSLLEKARELRDKKTYIAATLEEFDQIINSTPGFVKGMWCGERECEDLVKEKTGATARCMPLEQEQLSDKCMCCGKPAKSMVYWGKAY.

It belongs to the class-II aminoacyl-tRNA synthetase family. ProS type 3 subfamily. As to quaternary structure, homodimer.

The protein localises to the cytoplasm. The enzyme catalyses tRNA(Pro) + L-proline + ATP = L-prolyl-tRNA(Pro) + AMP + diphosphate. Its function is as follows. Catalyzes the attachment of proline to tRNA(Pro) in a two-step reaction: proline is first activated by ATP to form Pro-AMP and then transferred to the acceptor end of tRNA(Pro). The protein is Proline--tRNA ligase of Ruminiclostridium cellulolyticum (strain ATCC 35319 / DSM 5812 / JCM 6584 / H10) (Clostridium cellulolyticum).